The following is a 529-amino-acid chain: Ribonuclease Y (529 aa).

The chain crosses the membrane as a helical span at residues 4-24; that stretch reads GLIYISLEVLVACLITALIMY. In terms of domain architecture, KH spans 216–297; that stretch reads LTTRIALPCS…NRIEEVYHRV (82 aa). Positions 342–435 constitute an HD domain; sequence ALQHSKEVAL…VCAADALSAG (94 aa).

Belongs to the RNase Y family.

It is found in the cell membrane. Functionally, endoribonuclease that initiates mRNA decay. This Helicobacter pylori (strain HPAG1) protein is Ribonuclease Y.